The sequence spans 87 residues: Small ribosomal subunit protein uS17 (87 aa).

The protein belongs to the universal ribosomal protein uS17 family. In terms of assembly, part of the 30S ribosomal subunit.

Functionally, one of the primary rRNA binding proteins, it binds specifically to the 5'-end of 16S ribosomal RNA. The polypeptide is Small ribosomal subunit protein uS17 (Oceanobacillus iheyensis (strain DSM 14371 / CIP 107618 / JCM 11309 / KCTC 3954 / HTE831)).